The following is a 132-amino-acid chain: Small ribosomal subunit protein uS8 (132 aa).

This sequence belongs to the universal ribosomal protein uS8 family. In terms of assembly, part of the 30S ribosomal subunit. Contacts proteins S5 and S12.

One of the primary rRNA binding proteins, it binds directly to 16S rRNA central domain where it helps coordinate assembly of the platform of the 30S subunit. The sequence is that of Small ribosomal subunit protein uS8 from Arthrobacter sp. (strain FB24).